Consider the following 480-residue polypeptide: ESX-1 secretion system ATPase EccB1 (480 aa).

The chain crosses the membrane as a helical span at residues 44–64 (IALGIVVAVLILAGAALLAYF). The tract at residues 461–480 (DTLPADPSPRKVPAGASGAP) is disordered.

The protein belongs to the EccB family. As to quaternary structure, part of the ESX-1 / type VII secretion system (T7SS), which is composed of cytosolic and membrane components. The ESX-1 membrane complex is composed of EccB1, EccCa1, EccCb1, EccD1 and EccE1.

It localises to the cell inner membrane. An ATPase. Part of the ESX-1 specialized secretion system, which delivers several virulence factors to host cells during infection, including the key virulence factors EsxA (ESAT-6) and EsxB (CFP-10). This is ESX-1 secretion system ATPase EccB1 from Mycobacterium tuberculosis (strain CDC 1551 / Oshkosh).